Consider the following 453-residue polypeptide: Probable glucan endo-1,3-beta-glucosidase eglC (453 aa).

The signal sequence occupies residues 1 to 18 (MQTRQLLALALAVAATEA). Glu-128 serves as the catalytic Proton donor. Asn-183 is a glycosylation site (N-linked (GlcNAc...) asparagine). Catalysis depends on Glu-239, which acts as the Nucleophile. Asn-364, Asn-368, and Asn-376 each carry an N-linked (GlcNAc...) asparagine glycan. Over residues 370–380 (TYPGSWNSTRP) the composition is skewed to polar residues. Positions 370 to 423 (TYPGSWNSTRPGANGGSSGSSGSSGSSGSSGSSGSSGSGASGHSSSTGSSSFPS) are disordered. Composition is skewed to low complexity over residues 389 to 402 (SSGSSGSSGSSGSS) and 410 to 423 (SGHSSSTGSSSFPS). Residue Asn-430 is the site of GPI-anchor amidated asparagine attachment. Residues 431–453 (SASGLSGSLFGAVAAVFVALAAL) constitute a propeptide, removed in mature form.

Belongs to the glycosyl hydrolase 17 family. Post-translationally, the GPI-anchor is attached to the protein in the endoplasmic reticulum and serves to target the protein to the cell surface. There, the glucosamine-inositol phospholipid moiety is cleaved off and the GPI-modified mannoprotein is covalently attached via its lipidless GPI glycan remnant to the 1,6-beta-glucan of the outer cell wall layer.

Its subcellular location is the cell membrane. The protein resides in the secreted. It localises to the cell wall. It carries out the reaction Hydrolysis of (1-&gt;3)-beta-D-glucosidic linkages in (1-&gt;3)-beta-D-glucans.. Glucanases play a role in cell expansion during growth, in cell-cell fusion during mating, and in spore release during sporulation. This enzyme may be involved in beta-glucan degradation and also function biosynthetically as a transglycosylase. The sequence is that of Probable glucan endo-1,3-beta-glucosidase eglC (eglC) from Aspergillus clavatus (strain ATCC 1007 / CBS 513.65 / DSM 816 / NCTC 3887 / NRRL 1 / QM 1276 / 107).